The chain runs to 91 residues: uncharacterized protein (91 aa).

The disordered stretch occupies residues 71–91; the sequence is NRENNSRSSVKQIINQETEEE. Positions 76–91 are enriched in polar residues; sequence SRSSVKQIINQETEEE.

This is an uncharacterized protein from Bacillus subtilis (strain 168).